The primary structure comprises 411 residues: Putative ion-transport protein YfeO (411 aa).

Transmembrane regions (helical) follow at residues 9-29, 54-74, 99-119, 149-169, 186-206, 223-243, 258-278, 296-316, 322-342, 343-363, and 386-406; these read MLLL…VLIA, DSPF…GLII, ALPG…SLGP, ILAS…AALI, LFAP…FFHP, IASG…AVWC, VLIL…GGPL, LGAG…VIAA, GGRI…LHAH, VEAV…VLVV, and LLCI…LLAA.

It belongs to the chloride channel (TC 2.A.49) family.

Its subcellular location is the cell membrane. The polypeptide is Putative ion-transport protein YfeO (Salmonella paratyphi A (strain ATCC 9150 / SARB42)).